A 191-amino-acid chain; its full sequence is Molybdenum cofactor guanylyltransferase (191 aa).

GTP-binding positions include 13 to 15 (LAG), Lys-26, Asp-72, and Asp-102. Mg(2+) is bound at residue Asp-102.

It belongs to the MobA family. In terms of assembly, monomer. It depends on Mg(2+) as a cofactor.

The protein resides in the cytoplasm. It catalyses the reaction Mo-molybdopterin + GTP + H(+) = Mo-molybdopterin guanine dinucleotide + diphosphate. In terms of biological role, transfers a GMP moiety from GTP to Mo-molybdopterin (Mo-MPT) cofactor (Moco or molybdenum cofactor) to form Mo-molybdopterin guanine dinucleotide (Mo-MGD) cofactor. In Pseudomonas putida (strain GB-1), this protein is Molybdenum cofactor guanylyltransferase.